Reading from the N-terminus, the 256-residue chain is 5-keto-4-deoxy-D-glucarate aldolase (256 aa).

Histidine 50 acts as the Proton acceptor in catalysis. Substrate is bound at residue glutamine 151. Position 153 (glutamate 153) interacts with Mg(2+). Residues serine 178 and aspartate 179 each contribute to the substrate site. Mg(2+) is bound at residue aspartate 179.

This sequence belongs to the HpcH/HpaI aldolase family. KDGluc aldolase subfamily. In terms of assembly, homohexamer; trimer of dimers. It depends on Mg(2+) as a cofactor.

The enzyme catalyses 5-dehydro-4-deoxy-D-glucarate = 2-hydroxy-3-oxopropanoate + pyruvate. It carries out the reaction 2-dehydro-3-deoxy-D-glucarate = 2-hydroxy-3-oxopropanoate + pyruvate. It functions in the pathway carbohydrate acid metabolism; galactarate degradation; D-glycerate from galactarate: step 2/3. Catalyzes the reversible retro-aldol cleavage of both 5-keto-4-deoxy-D-glucarate and 2-keto-3-deoxy-D-glucarate to pyruvate and tartronic semialdehyde. The polypeptide is 5-keto-4-deoxy-D-glucarate aldolase (Shigella sonnei (strain Ss046)).